The sequence spans 419 residues: GTPase Obg (419 aa).

An Obg domain is found at 1–158; the sequence is MHFVDEAFNE…FKIKTELKVL (158 aa). In terms of domain architecture, OBG-type G spans 159 to 324; sequence ADIGLLGFPS…LKYKMSSFLQ (166 aa). GTP is bound by residues 165 to 172, 190 to 194, 211 to 214, 278 to 281, and 305 to 307; these read GFPSVGKS, FTTIK, DLPG, NKMD, and SLV. Ser172 and Thr192 together coordinate Mg(2+). One can recognise an OCT domain in the interval 342–419; that stretch reads TLTDNLKTIS…KICDRLFDFL (78 aa).

This sequence belongs to the TRAFAC class OBG-HflX-like GTPase superfamily. OBG GTPase family. As to quaternary structure, monomer. Requires Mg(2+) as cofactor.

The protein resides in the cytoplasm. Functionally, an essential GTPase which binds GTP, GDP and possibly (p)ppGpp with moderate affinity, with high nucleotide exchange rates and a fairly low GTP hydrolysis rate. Plays a role in control of the cell cycle, stress response, ribosome biogenesis and in those bacteria that undergo differentiation, in morphogenesis control. The polypeptide is GTPase Obg (Aster yellows witches'-broom phytoplasma (strain AYWB)).